The chain runs to 416 residues: 4-hydroxy-3-methylbut-2-en-1-yl diphosphate synthase (flavodoxin) (416 aa).

Cysteine 304, cysteine 307, cysteine 350, and glutamate 357 together coordinate [4Fe-4S] cluster.

This sequence belongs to the IspG family. Requires [4Fe-4S] cluster as cofactor.

The enzyme catalyses (2E)-4-hydroxy-3-methylbut-2-enyl diphosphate + oxidized [flavodoxin] + H2O + 2 H(+) = 2-C-methyl-D-erythritol 2,4-cyclic diphosphate + reduced [flavodoxin]. Its pathway is isoprenoid biosynthesis; isopentenyl diphosphate biosynthesis via DXP pathway; isopentenyl diphosphate from 1-deoxy-D-xylulose 5-phosphate: step 5/6. Its function is as follows. Converts 2C-methyl-D-erythritol 2,4-cyclodiphosphate (ME-2,4cPP) into 1-hydroxy-2-methyl-2-(E)-butenyl 4-diphosphate. The polypeptide is 4-hydroxy-3-methylbut-2-en-1-yl diphosphate synthase (flavodoxin) (Rhizobium leguminosarum bv. trifolii (strain WSM2304)).